The sequence spans 454 residues: tRNA modification GTPase MnmE (454 aa).

Residues arginine 23, glutamate 80, and lysine 120 each contribute to the (6S)-5-formyl-5,6,7,8-tetrahydrofolate site. The TrmE-type G domain occupies glycine 216–glycine 377. Residue asparagine 226 coordinates K(+). GTP contacts are provided by residues asparagine 226–serine 231, threonine 245–threonine 251, aspartate 270–glycine 273, asparagine 335–aspartate 338, and serine 358–arginine 360. Serine 230 provides a ligand contact to Mg(2+). Residues threonine 245, isoleucine 247, and threonine 250 each contribute to the K(+) site. Threonine 251 contributes to the Mg(2+) binding site. Position 454 (lysine 454) interacts with (6S)-5-formyl-5,6,7,8-tetrahydrofolate.

This sequence belongs to the TRAFAC class TrmE-Era-EngA-EngB-Septin-like GTPase superfamily. TrmE GTPase family. As to quaternary structure, homodimer. Heterotetramer of two MnmE and two MnmG subunits. K(+) serves as cofactor.

Its subcellular location is the cytoplasm. Its function is as follows. Exhibits a very high intrinsic GTPase hydrolysis rate. Involved in the addition of a carboxymethylaminomethyl (cmnm) group at the wobble position (U34) of certain tRNAs, forming tRNA-cmnm(5)s(2)U34. The polypeptide is tRNA modification GTPase MnmE (Yersinia enterocolitica serotype O:8 / biotype 1B (strain NCTC 13174 / 8081)).